The following is a 90-amino-acid chain: Protein A54 (90 aa).

This is Protein A54 from Homo sapiens (Human).